The primary structure comprises 876 residues: MSKSTAEIRQAFLDFFHSKGHQVVASSSLVPHNDPTLLFTNAGMNQFKDVFLGLDKRNYSRATTSQRCVRAGGKHNDLENVGYTARHHTFFEMLGNFSFGDYFKHDAIQFAWELLTSEKWFALPKERLWVTVYESDDEAYEIWEKEVGIPRERIIRIGDNKGAPYASDNFWQMGDTGPCGPCTEIFYDHGDHIWGGPPGSPEEDGDRYIEIWNIVFMQFNRQADGTMEPLPKPSVDTGMGLERIAAVLQHVNSNYDIDLFRTLIQAVAKVTGATDLSNKSLRVIADHIRSCAFLIADGVMPANENRGYVLRRIIRRAVRHGNMLGAKETFFYKLVGPLIDVMGSAGEDLKRQQAQVEQVLKTEEEQFARTLERGLALLDEELAKLSGDTLDGETAFRLYDTYGFPVDLTADVCRERNIKVDEAGFEAAMEEQRRRAREASGFGADYNAMIRVDSASEFKGYDHLELNGKVTALFVDGKAVDAINAGQEAVVVLDQTPFYAESGGQVGDKGELKGANFSFAVEDTQKYGQAIGHIGKLAAGSLKVGDAVQADVDEARRARIRLNHSATHLMHAALRQVLGTHVSQKGSLVNDKVLRFDFSHNEAMKPEEIRAVEDLVNTQIRRNLPIETNIMDLEAAKAKGAMALFGEKYDERVRVLSMGDFSTELCGGTHASRTGDIGLFRIISESGTAAGVRRIEAVTGEGAIATVHADSDRLSEVAHLLKGDSNNLADKVRSVLERTRQLEKELQQLKEQAAAQESANLSSKAIDVNGVKLLVSELSGVEPKMLRTMVDDLKNQLGSTIIVLATVVEGKVSLIAGVSKDVTDRVKAGELIGMVAQQVGGKGGGRPDMAQAGGTDAAALPAALASVKGWVSAKLQ.

The residue at position 74 (Lys74) is an N6-acetyllysine. Residues His564, His568, Cys666, and His670 each contribute to the Zn(2+) site.

Belongs to the class-II aminoacyl-tRNA synthetase family. In terms of assembly, homotetramer. Requires Zn(2+) as cofactor.

The protein localises to the cytoplasm. It catalyses the reaction tRNA(Ala) + L-alanine + ATP = L-alanyl-tRNA(Ala) + AMP + diphosphate. Its function is as follows. Catalyzes the attachment of alanine to tRNA(Ala) in a two-step reaction: alanine is first activated by ATP to form Ala-AMP and then transferred to the acceptor end of tRNA(Ala). Also edits incorrectly charged Ser-tRNA(Ala) and Gly-tRNA(Ala) via its editing domain. This is Alanine--tRNA ligase from Escherichia coli (strain ATCC 8739 / DSM 1576 / NBRC 3972 / NCIMB 8545 / WDCM 00012 / Crooks).